Here is a 122-residue protein sequence, read N- to C-terminus: MLSLLHTSTLAVLGALCVYGAGHLEQPQISSTKTLSKTARLECVVSGITISATSVYWYRERPGEVIQFLVSISYDGTVRKESGIPSGKFEVDRIPETSTSTLTIHNVEKQDIATYYCALWEV.

A signal peptide spans 1-20 (MLSLLHTSTLAVLGALCVYG). Residues 27 to 122 (PQISSTKTLS…ATYYCALWEV (96 aa)) form the Ig-like domain. A disulfide bond links C43 and C117.

In terms of assembly, gamma-delta TR is a heterodimer composed of a gamma and delta chain; disulfide-linked. The gamma-delta TR is associated with the transmembrane signaling CD3 coreceptor proteins following the stoichiometry: a single gamma-delta TR heterodimer associates with one CD3D-CD3E heterodimer, one CD3G-CD3E heterodimer and one CD247 homodimer forming a stable octameric structure. Upon activation, gamma-delta TR complex associates with FCER1G to initiate intracellular signaling.

It is found in the cell membrane. Functionally, v region of the variable domain of T cell receptor (TR) gamma chain that participates in the antigen recognition. Gamma-delta TRs recognize a variety of self and foreign non-peptide antigens frequently expressed at the epithelial boundaries between the host and external environment, including endogenous lipids presented by MH-like protein CD1D and phosphoantigens presented by butyrophilin-like molecule BTN3A1. Upon antigen recognition induces rapid, innate-like immune responses involved in pathogen clearance and tissue repair. Binding of gamma-delta TR complex to antigen triggers phosphorylation of immunoreceptor tyrosine-based activation motifs (ITAMs) in the CD3 chains by the LCK and FYN kinases, allowing the recruitment, phosphorylation, and activation of ZAP70 that facilitates phosphorylation of the scaffolding proteins LCP2 and LAT. This lead to the formation of a supramolecular signalosome that recruits the phospholipase PLCG1, resulting in calcium mobilization and ERK activation, ultimately leading to T cell expansion and differentiation into effector cells. Gamma-delta TRs are produced through somatic rearrangement of a limited repertoire of variable (V), diversity (D), and joining (J) genes. The potential diversity of gamma-delta TRs is conferred by the unique ability to rearrange (D) genes in tandem and to utilize all three reading frames. The combinatorial diversity is considerably increased by the sequence exonuclease trimming and random nucleotide (N) region additions which occur during the V-(D)-J rearrangements. This is T cell receptor gamma variable 9 from Homo sapiens (Human).